We begin with the raw amino-acid sequence, 242 residues long: Biosynthetic peptidoglycan transglycosylase (242 aa).

Residues 19 to 39 (ILAALAVFWGGGIALFSVVPV) form a helical membrane-spanning segment.

The protein belongs to the glycosyltransferase 51 family.

It localises to the cell inner membrane. It catalyses the reaction [GlcNAc-(1-&gt;4)-Mur2Ac(oyl-L-Ala-gamma-D-Glu-L-Lys-D-Ala-D-Ala)](n)-di-trans,octa-cis-undecaprenyl diphosphate + beta-D-GlcNAc-(1-&gt;4)-Mur2Ac(oyl-L-Ala-gamma-D-Glu-L-Lys-D-Ala-D-Ala)-di-trans,octa-cis-undecaprenyl diphosphate = [GlcNAc-(1-&gt;4)-Mur2Ac(oyl-L-Ala-gamma-D-Glu-L-Lys-D-Ala-D-Ala)](n+1)-di-trans,octa-cis-undecaprenyl diphosphate + di-trans,octa-cis-undecaprenyl diphosphate + H(+). It participates in cell wall biogenesis; peptidoglycan biosynthesis. Its function is as follows. Peptidoglycan polymerase that catalyzes glycan chain elongation from lipid-linked precursors. This is Biosynthetic peptidoglycan transglycosylase from Salmonella paratyphi B (strain ATCC BAA-1250 / SPB7).